The primary structure comprises 201 residues: Dephospho-CoA kinase (201 aa).

The region spanning 2-201 is the DPCK domain; it reads MIGLTGGIAS…KRWKVIPEDQ (200 aa). 10–15 is a binding site for ATP; sequence ASGKSS.

Belongs to the CoaE family.

It is found in the cytoplasm. The catalysed reaction is 3'-dephospho-CoA + ATP = ADP + CoA + H(+). The protein operates within cofactor biosynthesis; coenzyme A biosynthesis; CoA from (R)-pantothenate: step 5/5. In terms of biological role, catalyzes the phosphorylation of the 3'-hydroxyl group of dephosphocoenzyme A to form coenzyme A. The polypeptide is Dephospho-CoA kinase (Halalkalibacterium halodurans (strain ATCC BAA-125 / DSM 18197 / FERM 7344 / JCM 9153 / C-125) (Bacillus halodurans)).